The chain runs to 410 residues: Lysosome-associated membrane glycoprotein 2 (410 aa).

The N-terminal stretch at 1 to 28 (MMCFRLSPVSGSGLVLSCLLLGAVQSYA) is a signal peptide. Residues 29–192 (FELNLPDSKA…SKEEFVCEED (164 aa)) are first lumenal domain. The Lumenal segment spans residues 29–375 (FELNLPDSKA…QDCSADEDNF (347 aa)). Residues Cys40 and Cys79 are joined by a disulfide bond. N-linked (GlcNAc...) asparagine glycosylation is found at Asn48, Asn58, Asn71, Asn75, Asn99, Asn119, Asn123, Asn179, Asn222, Asn229, Asn242, Asn260, Asn275, Asn300, Asn307, Asn317, and Asn356. Cys153 and Cys189 are disulfide-bonded. Residues 193–228 (KSVTTVRPIIHTTVPPPTTTPTPLPPKVGNYSVSNG) form a hinge region. Residues 229-375 (NATCLLATMG…QDCSADEDNF (147 aa)) form a second lumenal domain region. A disulfide bridge connects residues Cys232 and Cys265. Cys331 and Cys368 are disulfide-bonded. The chain crosses the membrane as a helical span at residues 376–399 (LVPIAVGAALAGVLALVLLAYFIG). The Cytoplasmic segment spans residues 400-410 (LKRHHTGYEQF). The important for binding and subsequent lysosomal degradation of target proteins stretch occupies residues 401 to 404 (KRHH).

The protein belongs to the LAMP family. As to quaternary structure, monomer. Forms large homooligomers. Interacts (via its cytoplasmic region) with HSPA8; HSPA8 mediates recruitment of proteins with a KFERQ motif to the surface of the lysosome for chaperone-mediated autophagy. Interacts with HSP90 in the lysosome lumen; this enhances LAMP2 stability. Interacts with MLLT11. Interacts with ABCB9. Interacts with FURIN. Interacts with CT55; this interaction may be important for LAMP2 protein stability. Interacts with TMEM175; inhibiting the proton channel activity of TMEM175. Forms a ternary complex with RAB7A and RUFY4 (via RUN domain); the interaction with RAB7A is mediated by RUFY4 (via RUN and coiled coil domains). In terms of processing, extensively N-glycosylated. Contains a minor proportion of O-linked glycans.

The protein resides in the lysosome membrane. It is found in the endosome membrane. It localises to the cell membrane. Its subcellular location is the cytoplasmic vesicle. The protein localises to the autophagosome membrane. Functionally, lysosomal membrane glycoprotein which plays an important role in lysosome biogenesis, lysosomal pH regulation and autophagy. Acts as an important regulator of lysosomal lumen pH regulation by acting as a direct inhibitor of the proton channel TMEM175, facilitating lysosomal acidification for optimal hydrolase activity. Plays an important role in chaperone-mediated autophagy, a process that mediates lysosomal degradation of proteins in response to various stresses and as part of the normal turnover of proteins with a long biological half-live. Functions by binding target proteins, such as GAPDH, NLRP3 and MLLT11, and targeting them for lysosomal degradation. In the chaperone-mediated autophagy, acts downstream of chaperones, such as HSPA8/HSC70, which recognize and bind substrate proteins and mediate their recruitment to lysosomes, where target proteins bind LAMP2. Plays a role in lysosomal protein degradation in response to starvation. Required for the fusion of autophagosomes with lysosomes during autophagy. Cells that lack LAMP2 express normal levels of VAMP8, but fail to accumulate STX17 on autophagosomes, which is the most likely explanation for the lack of fusion between autophagosomes and lysosomes. Required for normal degradation of the contents of autophagosomes. Required for efficient MHC class II-mediated presentation of exogenous antigens via its function in lysosomal protein degradation; antigenic peptides generated by proteases in the endosomal/lysosomal compartment are captured by nascent MHC II subunits. Is not required for efficient MHC class II-mediated presentation of endogenous antigens. The chain is Lysosome-associated membrane glycoprotein 2 (LAMP2) from Cricetulus griseus (Chinese hamster).